A 243-amino-acid chain; its full sequence is Glucosamine-6-phosphate deaminase (243 aa).

D67 (proton acceptor; for enolization step) is an active-site residue. Residue N137 is the For ring-opening step of the active site. The active-site Proton acceptor; for ring-opening step is H139. The active-site For ring-opening step is the E144.

Belongs to the glucosamine/galactosamine-6-phosphate isomerase family. NagB subfamily.

The enzyme catalyses alpha-D-glucosamine 6-phosphate + H2O = beta-D-fructose 6-phosphate + NH4(+). The protein operates within amino-sugar metabolism; N-acetylneuraminate degradation; D-fructose 6-phosphate from N-acetylneuraminate: step 5/5. In terms of biological role, catalyzes the reversible isomerization-deamination of glucosamine 6-phosphate (GlcN6P) to form fructose 6-phosphate (Fru6P) and ammonium ion. The sequence is that of Glucosamine-6-phosphate deaminase from Staphylococcus epidermidis (strain ATCC 35984 / DSM 28319 / BCRC 17069 / CCUG 31568 / BM 3577 / RP62A).